The following is a 138-amino-acid chain: Putative pre-16S rRNA nuclease (138 aa).

Belongs to the YqgF nuclease family.

The protein localises to the cytoplasm. In terms of biological role, could be a nuclease involved in processing of the 5'-end of pre-16S rRNA. In Carboxydothermus hydrogenoformans (strain ATCC BAA-161 / DSM 6008 / Z-2901), this protein is Putative pre-16S rRNA nuclease.